The chain runs to 142 residues: Protein tost-1 (142 aa).

The disordered stretch occupies residues 97–123; it reads KVFEEEDKENAPTKKAVLKPSSTDEKK.

Component of the tost-1 variant of the PETISCO complex (also called the pid-3, erh-2, tofu-6, and ife-3 small RNA complex) containing at least tost-1, tofu-6, ife-3, pid-3, and erh-2, which plays an essential role in embryogenesis. Within the complex interacts with erh-2. Within the complex interacts with pid-3 and tofu-6. In contrast to the pid-1 variant of the PETISCO complex, the tost-1 variant of the PETISCO complex plays a minor role in the biogenesis of a class of 21 nucleotide PIWI-interacting RNAs (piRNAs) that possess a uracil residue at the 5'-end (also called 21U-RNAs). As to expression, expressed in the germline.

The protein resides in the cytoplasm. Its subcellular location is the nucleus. Functionally, component of the tost-1 variant of the PETISCO complex which plays an essential role in embryogenesis. Within the complex acts as an adapter which binds to the complex via erh-2. Does not seem to play a role in the biogenesis of a class of 21 nucleotide PIWI-interacting RNAs (piRNAs) that possess a uracil residue at the 5'-end (also called 21U-RNAs). May inhibit 21U-RNA accumulation. Required for chromosome segregation and cell division in early embryos. The polypeptide is Protein tost-1 (Caenorhabditis elegans).